The following is a 53-amino-acid chain: uncharacterized protein (53 aa).

This is an uncharacterized protein from Archaeoglobus fulgidus (strain ATCC 49558 / DSM 4304 / JCM 9628 / NBRC 100126 / VC-16).